Consider the following 285-residue polypeptide: Probable endonuclease 4 (285 aa).

Zn(2+)-binding residues include His-69, His-109, Glu-145, Asp-179, His-182, His-216, Asp-229, His-231, and Glu-261.

The protein belongs to the AP endonuclease 2 family. The cofactor is Zn(2+).

It carries out the reaction Endonucleolytic cleavage to 5'-phosphooligonucleotide end-products.. Its function is as follows. Endonuclease IV plays a role in DNA repair. It cleaves phosphodiester bonds at apurinic or apyrimidinic (AP) sites, generating a 3'-hydroxyl group and a 5'-terminal sugar phosphate. The protein is Probable endonuclease 4 of Escherichia coli O1:K1 / APEC.